The following is a 571-amino-acid chain: Wee1-like protein kinase 1-A (571 aa).

The segment at 1–101 (MSLQPVPHRL…PDCPGTPPHK (101 aa)) is disordered. Positions 81-98 (PASPPGPAASPPDCPGTP) are enriched in pro residues. The Protein kinase domain occupies 224 to 494 (FHELEKIGSG…SMALVKHSVL (271 aa)). ATP is bound by residues 230–238 (IGSGEFGSV) and Lys253. Asp351 (proton acceptor) is an active-site residue. Residues Asn356 and Asp388 each coordinate Mg(2+). Residues 500–539 (KNAEQLRIELNAEKFKNALLQKELKKAQIAKAAAEERALF) are a coiled coil.

Belongs to the protein kinase superfamily. Ser/Thr protein kinase family. WEE1 subfamily. In terms of tissue distribution, zygotically expressed. Expressed in regions of the embryo that are devoid of mitotic cells, such as the involuting mesoderm.

It localises to the nucleus. The catalysed reaction is L-tyrosyl-[protein] + ATP = O-phospho-L-tyrosyl-[protein] + ADP + H(+). Its function is as follows. Acts as a zygotic negative regulator of entry into mitosis (G2 to M transition) by protecting the nucleus from cytoplasmically activated cyclin B1-complexed cdk1 before the onset of mitosis by mediating phosphorylation of cdk1 on 'Tyr-15'. Specifically phosphorylates and inactivates cyclin B1-complexed cdk1 reaching a maximum during G2 phase and a minimum as cells enter M phase. Phosphorylation of cyclin B1-cdk1 occurs exclusively on 'Tyr-15' and phosphorylation of monomeric cdk1 does not occur. Involved in convergent extension of the paraxial mesoderm during neurulation by inhibiting the cell cycle. This Xenopus laevis (African clawed frog) protein is Wee1-like protein kinase 1-A (wee1-a).